Here is a 507-residue protein sequence, read N- to C-terminus: MLATRNLVPIIRASIKWRIKLSALHYCMSDAETSEALLEDNSAYINNEKHNLFLEKIFSDYQPFKHDNRTQVSCSQHMRDYRPLLTLSSATRSVLFSLLASDMSIILSISPNTGILLCIGHLLASDIEDVVIVLSRGSPLVDLASTRIFKLAQNGTLRFAIKRTTFQELRFLRKSKDENVMEAATRGIITIRQLYYENKVLPLRFTGNVATHIEENLEFEEQITWRTHVDSSIFPNTRCAYPSGYGPSAKIPCLSHKPNDILAYTGSTLVGRVVSKLAPEQVMKKVTLESGGKSTMAVFIQHDVTWAVENTQFGVFDRQGQCCIAQSGYTVHRSTLSQIVENNLEKDPSYVLHVDTESDIRGPFILKIHFESIPRRINSAKAENSKVLCGGPRENSVYLYPTLSATLTDECRIMKEEVFAPIITILCVKTVDEAIQRGNNSKFGLAAYVTKENVHGIILSTALKTVKLFIICVHLASYQIPFGGNKNSGMGAELGKRALENYTEGNH.

A mitochondrion-targeting transit peptide spans 1-21 (MLATRNLVPIIRASIKWRIKL). 266–271 (GSTLVG) provides a ligand contact to NAD(+). Catalysis depends on residues Glu289 and Cys323.

The protein belongs to the aldehyde dehydrogenase family. As to quaternary structure, homotetramer.

The protein resides in the mitochondrion matrix. The enzyme catalyses an aldehyde + NAD(+) + H2O = a carboxylate + NADH + 2 H(+). The protein operates within alcohol metabolism; ethanol degradation; acetate from ethanol: step 2/2. This Saccharomyces cerevisiae (Baker's yeast) protein is Aldehyde dehydrogenase 1, mitochondrial (ALD1).